The sequence spans 579 residues: Insulin-like growth factor 2 mRNA-binding protein 3 (579 aa).

RRM domains follow at residues 2–75 (NKLY…HSVP) and 81–156 (RKLQ…YIPD). Residues 158–192 (TAAQQNPSPQLRGRRGPGQRGSSRQASPGSVSKQK) form a disordered region. The residue at position 165 (serine 165) is a Phosphoserine. Serine 184 is modified (phosphoserine; by MTOR). KH domains lie at 195-260 (DLPL…CKSI), 276-343 (EIPL…EEEI), and 405-470 (TETV…QGRI). Residues lysine 450 and lysine 475 each participate in a glycyl lysine isopeptide (Lys-Gly) (interchain with G-Cter in SUMO2) cross-link. One can recognise a KH 4 domain in the interval 487 to 553 (KLEAHIRVPS…YACQVAQRKI (67 aa)). At threonine 528 the chain carries Phosphothreonine.

It belongs to the RRM IMP/VICKZ family. In terms of assembly, can form homooligomers and heterooligomers with IGF2BP1 and IGF2BP3 in an RNA-dependent manner. Interacts with IGF2BP1. Interacts with ELAVL1, DHX9, HNRNPU, MATR3 and PABPC1. In terms of tissue distribution, expressed in oocytes, spermatogonia and spermatocytes (at protein level).

It localises to the nucleus. Its subcellular location is the cytoplasm. It is found in the P-body. The protein resides in the stress granule. Its function is as follows. RNA-binding factor that may recruit target transcripts to cytoplasmic protein-RNA complexes (mRNPs). This transcript 'caging' into mRNPs allows mRNA transport and transient storage. It also modulates the rate and location at which target transcripts encounter the translational apparatus and shields them from endonuclease attacks or microRNA-mediated degradation. Preferentially binds to N6-methyladenosine (m6A)-containing mRNAs and increases their stability. Binds to the 3'-UTR of CD44 mRNA and stabilizes it, hence promotes cell adhesion and invadopodia formation. Binds to beta-actin/ACTB and MYC transcripts. Increases MYC mRNA stability by binding to the coding region instability determinant (CRD) and binding is enhanced by m6A-modification of the CRD. Binds to the 5'-UTR of the insulin-like growth factor 2 (IGF2) mRNAs. This Mus musculus (Mouse) protein is Insulin-like growth factor 2 mRNA-binding protein 3 (Igf2bp3).